Reading from the N-terminus, the 667-residue chain is Chaperone protein DnaK (667 aa).

Thr-196 carries the post-translational modification Phosphothreonine; by autocatalysis. Disordered stretches follow at residues 495–525 (EANSGLSDEEIEKMKEEAEQHAEEDERRKER) and 595–667 (AGEE…GDDE). The span at 506 to 525 (EKMKEEAEQHAEEDERRKER) shows a compositional bias: basic and acidic residues. The segment covering 595-612 (AGEEIREAQQQQAQQGAA) has biased composition (low complexity). Positions 630-641 (GPAGGPTGGPAS) are enriched in gly residues. The segment covering 647-667 (DSDEEDVQDADYEVVDEGDDE) has biased composition (acidic residues).

This sequence belongs to the heat shock protein 70 family.

In terms of biological role, acts as a chaperone. In Salinibacter ruber (strain DSM 13855 / M31), this protein is Chaperone protein DnaK.